The sequence spans 212 residues: Leucyl/phenylalanyl-tRNA--protein transferase (212 aa).

This sequence belongs to the L/F-transferase family.

Its subcellular location is the cytoplasm. It carries out the reaction N-terminal L-lysyl-[protein] + L-leucyl-tRNA(Leu) = N-terminal L-leucyl-L-lysyl-[protein] + tRNA(Leu) + H(+). The catalysed reaction is N-terminal L-arginyl-[protein] + L-leucyl-tRNA(Leu) = N-terminal L-leucyl-L-arginyl-[protein] + tRNA(Leu) + H(+). It catalyses the reaction L-phenylalanyl-tRNA(Phe) + an N-terminal L-alpha-aminoacyl-[protein] = an N-terminal L-phenylalanyl-L-alpha-aminoacyl-[protein] + tRNA(Phe). Its function is as follows. Functions in the N-end rule pathway of protein degradation where it conjugates Leu, Phe and, less efficiently, Met from aminoacyl-tRNAs to the N-termini of proteins containing an N-terminal arginine or lysine. The chain is Leucyl/phenylalanyl-tRNA--protein transferase from Jannaschia sp. (strain CCS1).